The sequence spans 349 residues: ATPase GET3 (349 aa).

Residue 27–34 (KGGVGKTT) coordinates ATP. Residue Asp58 is part of the active site. The ATP site is built by Glu240 and Asn267. Residues Cys280 and Cys283 each coordinate Zn(2+).

The protein belongs to the arsA ATPase family. As to quaternary structure, homodimer. Component of the Golgi to ER traffic (GET) complex, which is composed of GET1, GET2 and GET3. Within the complex, GET1 and GET2 form a heterotetramer which is stabilized by phosphatidylinositol binding and which binds to the GET3 homodimer. Interacts with the chloride channel protein GEF1.

Its subcellular location is the cytoplasm. It is found in the endoplasmic reticulum. It localises to the golgi apparatus. Its function is as follows. ATPase required for the post-translational delivery of tail-anchored (TA) proteins to the endoplasmic reticulum. Recognizes and selectively binds the transmembrane domain of TA proteins in the cytosol. This complex then targets to the endoplasmic reticulum by membrane-bound receptors GET1 and GET2, where the tail-anchored protein is released for insertion. This process is regulated by ATP binding and hydrolysis. ATP binding drives the homodimer towards the closed dimer state, facilitating recognition of newly synthesized TA membrane proteins. ATP hydrolysis is required for insertion. Subsequently, the homodimer reverts towards the open dimer state, lowering its affinity for the GET1-GET2 receptor, and returning it to the cytosol to initiate a new round of targeting. Cooperates with the HDEL receptor ERD2 to mediate the ATP-dependent retrieval of resident ER proteins that contain a C-terminal H-D-E-L retention signal from the Golgi to the ER. Involved in low-level resistance to the oxyanions arsenite and arsenate, and in heat tolerance. The sequence is that of ATPase GET3 from Eremothecium gossypii (strain ATCC 10895 / CBS 109.51 / FGSC 9923 / NRRL Y-1056) (Yeast).